A 342-amino-acid polypeptide reads, in one-letter code: Strictosidine synthase (342 aa).

A signal peptide spans 1–20 (KLSDSQTMALFTVFLLFLSS). N-linked (GlcNAc...) asparagine glycosylation is present at Asn-89.

The protein belongs to the strictosidine synthase family. As to quaternary structure, monomer.

The protein localises to the vacuole. It catalyses the reaction 3alpha(S)-strictosidine + H2O = secologanin + tryptamine. Its pathway is alkaloid biosynthesis; 3alpha(S)-strictosidine biosynthesis; 3alpha(S)-strictosidine from secologanin and tryptamine: step 1/1. Functionally, catalyzes the stereospecific condensation of tryptamine with secologanin to form strictosidine, the key intermediate of indole alkaloid biosynthesis. The polypeptide is Strictosidine synthase (STR1) (Rauvolfia mannii).